The primary structure comprises 485 residues: NADH-quinone oxidoreductase subunit N (485 aa).

Helical transmembrane passes span Ile10–Leu30, Ile40–Ile60, Val71–Val91, Gly107–His127, Leu129–Ile149, Phe164–Met184, Phe209–Pro229, Ile248–Gly268, Trp276–Leu296, Leu304–Pro324, Val336–Gly356, Ala377–Ile397, Gly410–Val430, and Leu454–Leu474.

Belongs to the complex I subunit 2 family. As to quaternary structure, NDH-1 is composed of 14 different subunits. Subunits NuoA, H, J, K, L, M, N constitute the membrane sector of the complex.

The protein localises to the cell inner membrane. It catalyses the reaction a quinone + NADH + 5 H(+)(in) = a quinol + NAD(+) + 4 H(+)(out). Functionally, NDH-1 shuttles electrons from NADH, via FMN and iron-sulfur (Fe-S) centers, to quinones in the respiratory chain. The immediate electron acceptor for the enzyme in this species is believed to be ubiquinone. Couples the redox reaction to proton translocation (for every two electrons transferred, four hydrogen ions are translocated across the cytoplasmic membrane), and thus conserves the redox energy in a proton gradient. The sequence is that of NADH-quinone oxidoreductase subunit N from Francisella tularensis subsp. holarctica (strain FTNF002-00 / FTA).